Here is a 511-residue protein sequence, read N- to C-terminus: Bifunctional purine biosynthesis protein PurH (511 aa).

One can recognise an MGS-like domain in the interval 1 to 145 (MKKRALVSVS…KNHKFVSVIV (145 aa)).

It belongs to the PurH family.

It catalyses the reaction (6R)-10-formyltetrahydrofolate + 5-amino-1-(5-phospho-beta-D-ribosyl)imidazole-4-carboxamide = 5-formamido-1-(5-phospho-D-ribosyl)imidazole-4-carboxamide + (6S)-5,6,7,8-tetrahydrofolate. The enzyme catalyses IMP + H2O = 5-formamido-1-(5-phospho-D-ribosyl)imidazole-4-carboxamide. It participates in purine metabolism; IMP biosynthesis via de novo pathway; 5-formamido-1-(5-phospho-D-ribosyl)imidazole-4-carboxamide from 5-amino-1-(5-phospho-D-ribosyl)imidazole-4-carboxamide (10-formyl THF route): step 1/1. It functions in the pathway purine metabolism; IMP biosynthesis via de novo pathway; IMP from 5-formamido-1-(5-phospho-D-ribosyl)imidazole-4-carboxamide: step 1/1. The chain is Bifunctional purine biosynthesis protein PurH from Bacillus cereus (strain ATCC 14579 / DSM 31 / CCUG 7414 / JCM 2152 / NBRC 15305 / NCIMB 9373 / NCTC 2599 / NRRL B-3711).